The primary structure comprises 29 residues: Cyclotide mden-B (29 aa).

Residues G1–N29 constitute a cross-link (cyclopeptide (Gly-Asn)). Cystine bridges form between C5-C19, C9-C21, and C14-C26.

It belongs to the cyclotide family. Moebius subfamily. This is a cyclic peptide.

Functionally, probably participates in a plant defense mechanism. This chain is Cyclotide mden-B, found in Melicytus dentatus (Tree violet).